Reading from the N-terminus, the 265-residue chain is Octanoyltransferase (265 aa).

The region spanning 35–254 (DEVPDTVLLL…HLRDVLENAE (220 aa)) is the BPL/LPL catalytic domain. Substrate contacts are provided by residues 73-80 (RGGKITWH), 184-186 (AIG), and 197-199 (GFA). The active-site Acyl-thioester intermediate is C215.

It belongs to the LipB family.

The protein resides in the cytoplasm. It catalyses the reaction octanoyl-[ACP] + L-lysyl-[protein] = N(6)-octanoyl-L-lysyl-[protein] + holo-[ACP] + H(+). It functions in the pathway protein modification; protein lipoylation via endogenous pathway; protein N(6)-(lipoyl)lysine from octanoyl-[acyl-carrier-protein]: step 1/2. Functionally, catalyzes the transfer of endogenously produced octanoic acid from octanoyl-acyl-carrier-protein onto the lipoyl domains of lipoate-dependent enzymes. Lipoyl-ACP can also act as a substrate although octanoyl-ACP is likely to be the physiological substrate. The sequence is that of Octanoyltransferase from Streptomyces coelicolor (strain ATCC BAA-471 / A3(2) / M145).